Reading from the N-terminus, the 733-residue chain is SWR1-complex protein 4 (733 aa).

2 disordered regions span residues 1–34 and 98–128; these read MTSHDVRDVLNLPSDHAGPRPSKKARTATPRPNL and PDGTVQDGSAEGQDSAATADNSADKPEDSSF. The 72-residue stretch at 146–217 folds into the SANT domain; it reads NTNLKHPDWT…DLKARYYEVA (72 aa). Residues 247 to 299 are a coiled coil; sequence KQEQNRKRFAENTLKRSSDEAREEEALLLEIKRIMARTERFNEERRELYNRLD. Over residues 371 to 384 the composition is skewed to low complexity; the sequence is AASRRESLAASSTA. Disordered regions lie at residues 371 to 488 and 564 to 733; these read AASR…GSGP and KKAE…KQKK. 4 stretches are compositionally biased toward basic and acidic residues: residues 387–423, 463–484, 564–589, and 610–653; these read NDHHEPPVREPPVRHERQESRSHHRNESRSERADRHG, PERRKLSEHEEQVYGVSHHDRL, KKAERERAAREAAEARGETVEKKGGE, and DDAK…KGEE. Residues 699-710 are compositionally biased toward low complexity; the sequence is GSSSGAGASSGA.

The protein belongs to the SWC4 family. In terms of assembly, component of the SWR1 chromatin-remodeling complex and of the NuA4 histone acetyltransferase complex.

The protein resides in the nucleus. Functionally, component of the SWR1 complex which mediates the ATP-dependent exchange of histone H2A for the H2A variant H2A.Z leading to transcriptional regulation of selected genes by chromatin remodeling. Component of the NuA4 histone acetyltransferase complex which is involved in transcriptional activation of selected genes principally by acetylation of nucleosomal histone H4 and H2A. The NuA4 complex is also involved in DNA repair. In Neurospora crassa (strain ATCC 24698 / 74-OR23-1A / CBS 708.71 / DSM 1257 / FGSC 987), this protein is SWR1-complex protein 4 (crc-1).